The primary structure comprises 252 residues: uncharacterized protein (252 aa).

Residues 1–22 (MIHSKRLRLWLYLVLLAVFISA) form the signal peptide. The N-palmitoyl cysteine moiety is linked to residue C23. The S-diacylglycerol cysteine moiety is linked to residue C23.

It belongs to the staphylococcal tandem lipoprotein family.

It localises to the cell membrane. This is an uncharacterized protein from Staphylococcus aureus (strain MW2).